The following is a 56-amino-acid chain: Large ribosomal subunit protein bL32 (56 aa).

The interval Met-1–His-37 is disordered. A compositionally biased stretch (basic residues) spans Lys-7–Arg-16. Polar residues predominate over residues Ala-21–Ala-31.

It belongs to the bacterial ribosomal protein bL32 family.

The sequence is that of Large ribosomal subunit protein bL32 from Shewanella loihica (strain ATCC BAA-1088 / PV-4).